A 423-amino-acid polypeptide reads, in one-letter code: MTDLLSRAHADALDAADPLRSLRDAFVFPQHGDRDQTYLVGNSLGLQPRAARAMVDEVLDQWGTLGVEGHFTGPTQWLTYHQLVRDALARVVGAQPGEVVAMNTLSVNLHLMMASFYRPTHERGAILIEAGAFPSDRHAVESQLRLRGLDPATHLIEVEADEPNGTLSMAAIADAIAQHGPRLALVLWPGIQYRTGQAFDLAEIVRLARAQGAAVGCDLAHAVGNIPLTLHDDGVDFAVWCNYKYLNAGPGAVGGCFVHERHANSDLPRIAGWWGHEQQTRFRMDPQFVPSPGAEGWQLSNPPVLALAPLRASLTLFDQAGMAALRAKSERLTGHLEQLIRARVPQVLQIVTPAEPMRRGCQLSLRVAGGRAQGRSLFEHLHAAGVLGDWREPDVIRIAPVPLYNRFSDLHTFVGQVEAWAAA.

Residues leucine 105, serine 106, 133–136, aspartate 218, histidine 221, and tyrosine 243 each bind pyridoxal 5'-phosphate; that span reads FPSD. Position 244 is an N6-(pyridoxal phosphate)lysine (lysine 244). The pyridoxal 5'-phosphate site is built by tryptophan 273 and asparagine 301.

Belongs to the kynureninase family. In terms of assembly, homodimer. The cofactor is pyridoxal 5'-phosphate.

It catalyses the reaction L-kynurenine + H2O = anthranilate + L-alanine + H(+). It carries out the reaction 3-hydroxy-L-kynurenine + H2O = 3-hydroxyanthranilate + L-alanine + H(+). It participates in amino-acid degradation; L-kynurenine degradation; L-alanine and anthranilate from L-kynurenine: step 1/1. The protein operates within cofactor biosynthesis; NAD(+) biosynthesis; quinolinate from L-kynurenine: step 2/3. Functionally, catalyzes the cleavage of L-kynurenine (L-Kyn) and L-3-hydroxykynurenine (L-3OHKyn) into anthranilic acid (AA) and 3-hydroxyanthranilic acid (3-OHAA), respectively. The chain is Kynureninase from Xanthomonas oryzae pv. oryzae (strain PXO99A).